Consider the following 497-residue polypeptide: NADH-quinone oxidoreductase subunit N (497 aa).

14 helical membrane-spanning segments follow: residues 14 to 34 (LMAM…MLSI), 45 to 65 (SLTV…WGLF), 86 to 106 (IFYS…AYPW), 116 to 136 (EFYL…SAQH), 137 to 157 (LAAV…LLGY), 171 to 191 (YFVL…MLYA), 215 to 235 (ILAG…LVPF), 253 to 273 (FLGT…FLYV), 281 to 301 (LNTA…LMAL), 309 to 329 (LLGY…IALH), 338 to 358 (VAVY…VVSL), 385 to 405 (AAVM…LGFI), 420 to 439 (WVLT…YYLR), and 461 to 481 (AFTA…VFGI).

Belongs to the complex I subunit 2 family. In terms of assembly, NDH-1 is composed of 13 different subunits. Subunits NuoA, H, J, K, L, M, N constitute the membrane sector of the complex.

The protein resides in the cell membrane. It catalyses the reaction a quinone + NADH + 5 H(+)(in) = a quinol + NAD(+) + 4 H(+)(out). In terms of biological role, NDH-1 shuttles electrons from NADH, via FMN and iron-sulfur (Fe-S) centers, to quinones in the respiratory chain. The immediate electron acceptor for the enzyme in this species is believed to be ubiquinone. Couples the redox reaction to proton translocation (for every two electrons transferred, four hydrogen ions are translocated across the cytoplasmic membrane), and thus conserves the redox energy in a proton gradient. The polypeptide is NADH-quinone oxidoreductase subunit N (Hamiltonella defensa subsp. Acyrthosiphon pisum (strain 5AT)).